Consider the following 188-residue polypeptide: Transmembrane protein 160 (188 aa).

The N-terminal 96 residues, 1-96, are a transit peptide targeting the mitochondrion; it reads MGGGWWWARV…ISFMQSDMGR (96 aa). The tract at residues 21-53 is disordered; it reads SLQPPQRPRSGGARGSFAPGHGPRAGASPPPVS. Residue Ser48 is modified to Phosphoserine. The next 2 membrane-spanning stretches (helical) occupy residues 102–122 and 135–155; these read FFLLGGLCVVWGGASYAVGLA and AAAGVGAVLAASLLWACAVGL. The interval 168-188 is disordered; the sequence is PEDDGAASTEGPDEAGRPPPE.

This sequence belongs to the TMEM160 family. Expressed in peripheral sensory neurons of dorsal root ganglia (DRG).

The protein localises to the mitochondrion inner membrane. The polypeptide is Transmembrane protein 160 (Mus musculus (Mouse)).